Consider the following 345-residue polypeptide: Fructose-bisphosphate aldolase, plasmid (345 aa).

Ser50 is a binding site for D-glyceraldehyde 3-phosphate. Residue Asp83 is the Proton donor of the active site. Zn(2+) is bound by residues His84, Asp105, Glu142, and His198. Residue Gly199 participates in dihydroxyacetone phosphate binding. His232 is a Zn(2+) binding site. Residues 233-235 and 275-278 contribute to the dihydroxyacetone phosphate site; these read GSS and NIDT.

Belongs to the class II fructose-bisphosphate aldolase family. In terms of assembly, homodimer. Zn(2+) is required as a cofactor.

The catalysed reaction is beta-D-fructose 1,6-bisphosphate = D-glyceraldehyde 3-phosphate + dihydroxyacetone phosphate. Its pathway is carbohydrate biosynthesis; Calvin cycle. The protein operates within carbohydrate degradation; glycolysis; D-glyceraldehyde 3-phosphate and glycerone phosphate from D-glucose: step 4/4. Its function is as follows. Catalyzes the aldol condensation of dihydroxyacetone phosphate (DHAP or glycerone-phosphate) with glyceraldehyde 3-phosphate (G3P) to form fructose 1,6-bisphosphate (FBP) in gluconeogenesis and the reverse reaction in glycolysis. This is Fructose-bisphosphate aldolase, plasmid (cbbAP) from Cupriavidus necator (strain ATCC 17699 / DSM 428 / KCTC 22496 / NCIMB 10442 / H16 / Stanier 337) (Ralstonia eutropha).